The chain runs to 235 residues: 7-cyano-7-deazaguanine synthase (235 aa).

12-22 (FSGGQDSTTCL) contributes to the ATP binding site. Zn(2+) contacts are provided by cysteine 200, cysteine 215, cysteine 218, and cysteine 221.

The protein belongs to the QueC family. The cofactor is Zn(2+).

The catalysed reaction is 7-carboxy-7-deazaguanine + NH4(+) + ATP = 7-cyano-7-deazaguanine + ADP + phosphate + H2O + H(+). The protein operates within purine metabolism; 7-cyano-7-deazaguanine biosynthesis. Catalyzes the ATP-dependent conversion of 7-carboxy-7-deazaguanine (CDG) to 7-cyano-7-deazaguanine (preQ(0)). This is 7-cyano-7-deazaguanine synthase from Leptothrix cholodnii (strain ATCC 51168 / LMG 8142 / SP-6) (Leptothrix discophora (strain SP-6)).